A 1344-amino-acid polypeptide reads, in one-letter code: MPAYFQRPENALKRANEFLEVGKKQPALDVLYDVMKSKKHRTWQKIHEPIMLKYLELCVDLRKSHLAKEGLYQYKNICQQVNIKSLEDVVRAYLKLAEEKTEAAKEESQQMVLDIEDLDNIQTPESVLLSAVSGEDTQDRTDRLLLTPWVKFLWESYRQCLDLLRNNSRVERLYHDIAQQAFKFCLQYTRKAEFRKLCDNLRMHLSQIQRHHNQSTAINLNNPESQSMHLETRLVQLDSAISMELWQEAFKAVEDIHGLFSLSKKPPKPQLMANYYNKVSTVFWKSGNALFHASTLHRLYHLSREMRKNLTQEEMQRMSTRVLLATLSIPITPERTDIARLLDMDGIIVEKQRRLATLLGLQAPPTRIGLINDMVRFSVLQYVVPEVKDLYNWLEVEFNPLKLCERVTKVLNWVREQPEKEPELQQYVPQLQNNTILRLLQQVAQIYQSIEFSRLTSLVPFVDAFQLERAIVDAARHCDLQVRIDHTSRTLSFGSDLNYATREDAPVGPHLQSMPSEQIRNQLTAMSSVLAKALEVIRPAHILQEKEEQHQLAVNAYLKNSRKEHQRILARRQTIEERKERLESLNIQREKEELEQREAELQKVRKAEEERLRQEAKEREKERILQEHEQIKKKTVRERLEQIKKTELGAKAFKDIDIEDLEELDPDFIMAKQVEQLEKEKKELQERLKNQEKKIDYFERAKRLEEIPLIKSAYEEQRVKDMDLWEQQEEERITTMQLEREKALEHKNRMSRMLEDRDLFVMRLKAARQSVYEEKLKQFEERLAEERHSRLEDRKRQRKEERKITYYREKEEEEQRRAEEQMLKEREERERAERAKREEELREYQERVKKLEEVERKKRQRELEIEERERRREEERRLGDDPLSRKDSRWGDRDSEGTWRKGPEADSEWRRGPPEKEWRRETRDDERPHRRDEDRLRRLGGDDEERESSLRPDDDRIPRRGLDDDRGPRRGPDEDRFSRRGTDDDRPSWRNADDDRPPRRIGDDDRGSWRHTDDDRPPRRGLDDERGSWRTADEDRGPRRGMDDDRGPRRGGADDERSSWRNADDDRGPRRGMDDDRGPRRGLDDDRGPWRNAAEDRISRRGADDDRGPWRNMDDDRVPRRGDDARPGPWRPFVKPGGWREKEKAREESWGPPRESRPSEEREWDRDKEKDRDNQDREENDKDLERDRDRERDGDREDRFRRPRDEGGWRRGPAEESSSWRDSSRRDDRDREDRRRDRDDRRDLRDLRDRRDLRDDRDRRGPPLRSEREEASSWRRTDDRKDDRTEERDPPRRVPPPALSRDREREREREGEKEKASWRAEKDRESLRRTKNETDEDGWTTVRR.

K68 is modified (N6-acetyllysine). The stretch at 82–120 (NIKSLEDVVRAYLKLAEEKTEAAKEESQQMVLDIEDLDN) forms a coiled coil. Positions 315 to 498 (MQRMSTRVLL…RTLSFGSDLN (184 aa)) constitute a PCI domain. Residues S492 and S584 each carry the phosphoserine modification. Positions 664-835 (LDPDFIMAKQ…REERERAERA (172 aa)) are interaction with EIF3B. 3 disordered regions span residues 807–844 (YREK…LREY), 866–1240 (EERE…DRDD), and 1252–1344 (DLRD…TVRR). Composition is skewed to basic and acidic residues over residues 866–1126 (EERE…DDAR), 1138–1240 (GWRE…DRDD), 1252–1292 (DLRD…DPPR), and 1300–1333 (SRDR…TKNE). Residue S895 is modified to Phosphoserine. Residues 924–931 (DDERPHRR) form a 1; truncated repeat. Residues 924–1133 (DDERPHRRDE…DARPGPWRPF (210 aa)) form a 21 X 10 AA approximate tandem repeats of [DA]-[DE]-[ED]-R-[PLIGFSV]-[RPS]-[RW]-[RL]-[GNIHT]-[DGLPTAM] region. The stretch at 932-941 (DEDRLRRLGG) is repeat 2. The 3; approximate repeat unit spans residues 942 to 951 (DDEERESSLR). S949 carries the phosphoserine modification. 17 consecutive repeat copies span residues 953 to 962 (DDDRIPRRGL), 963 to 972 (DDDRGPRRGP), 973 to 982 (DEDRFSRRGT), 983 to 992 (DDDRPSWRNA), 993 to 1002 (DDDRPPRRIG), 1003 to 1012 (DDDRGSWRHT), 1013 to 1022 (DDDRPPRRGL), 1023 to 1032 (DDERGSWRTA), 1033 to 1042 (DEDRGPRRGM), 1043 to 1052 (DDDRGPRRGG), 1054 to 1063 (DDERSSWRNA), 1064 to 1073 (DDDRGPRRGM), 1074 to 1083 (DDDRGPRRGL), 1084 to 1093 (DDDRGPWRNA), 1094 to 1103 (AEDRISRRGA), 1104 to 1113 (DDDRGPWRNM), and 1114 to 1123 (DDDRVPRRGD). Residue S1028 is modified to Phosphoserine. The stretch at 1124–1133 (DARPGPWRPF) is one 21; approximate repeat. Residues S1149, S1159, and S1223 each carry the phosphoserine modification. Residues S1300 and S1326 each carry the phosphoserine modification.

This sequence belongs to the eIF-3 subunit A family. In terms of assembly, interacts with KRT7. Component of the eukaryotic translation initiation factor 3 (eIF-3) complex, which is composed of 13 subunits: EIF3A, EIF3B, EIF3C, EIF3D, EIF3E, EIF3F, EIF3G, EIF3H, EIF3I, EIF3J, EIF3K, EIF3L and EIF3M. The eIF-3 complex appears to include 3 stable modules: module A is composed of EIF3A, EIF3B, EIF3G and EIF3I; module B is composed of EIF3F, EIF3H, and EIF3M; and module C is composed of EIF3C, EIF3D, EIF3E, EIF3L and EIF3K. EIF3C of module C binds EIF3B of module A and EIF3H of module B, thereby linking the three modules. EIF3J is a labile subunit that binds to the eIF-3 complex via EIF3B. The eIF-3 complex may interact with RPS6KB1 under conditions of nutrient depletion. Mitogenic stimulation may lead to binding and activation of a complex composed of MTOR and RPTOR, leading to phosphorylation and release of RPS6KB1 and binding of EIF4B to eIF-3. Interacts with EIF4G1 and PIWIL2. Phosphorylated. Phosphorylation is enhanced upon serum stimulation.

The protein localises to the cytoplasm. It is found in the cytoskeleton. It localises to the microtubule organizing center. Its subcellular location is the centrosome. The protein resides in the nucleus. Functionally, RNA-binding component of the eukaryotic translation initiation factor 3 (eIF-3) complex, which is required for several steps in the initiation of protein synthesis. The eIF-3 complex associates with the 40S ribosome and facilitates the recruitment of eIF-1, eIF-1A, eIF-2:GTP:methionyl-tRNAi and eIF-5 to form the 43S pre-initiation complex (43S PIC). The eIF-3 complex stimulates mRNA recruitment to the 43S PIC and scanning of the mRNA for AUG recognition. The eIF-3 complex is also required for disassembly and recycling of post-termination ribosomal complexes and subsequently prevents premature joining of the 40S and 60S ribosomal subunits prior to initiation. The eIF-3 complex specifically targets and initiates translation of a subset of mRNAs involved in cell proliferation, including cell cycling, differentiation and apoptosis, and uses different modes of RNA stem-loop binding to exert either translational activation or repression. In Mus musculus (Mouse), this protein is Eukaryotic translation initiation factor 3 subunit A (Eif3a).